A 604-amino-acid polypeptide reads, in one-letter code: Sulfite reductase [NADPH] flavoprotein alpha-component (604 aa).

The region spanning 65-203 (VTILYGSQTG…AAGQWHADVL (139 aa)) is the Flavodoxin-like domain. Residues 71–76 (SQTGNG), 118–121 (STHG), and 154–163 (LGDSSYEFFC) contribute to the FMN site. The 218-residue stretch at 236–453 (QNPYSAEVLV…VEPNKHFRLP (218 aa)) folds into the FAD-binding FR-type domain. Residues Thr324, Leu358, 392–395 (RLYS), 410–412 (TVA), and 425–428 (GGAS) each bind FAD. NADP(+) is bound by residues 524-525 (SR), 530-534 (KIYVQ), and Asp566. Tyr604 contacts FAD.

It belongs to the NADPH-dependent sulphite reductase flavoprotein subunit CysJ family. In the N-terminal section; belongs to the flavodoxin family. The protein in the C-terminal section; belongs to the flavoprotein pyridine nucleotide cytochrome reductase family. In terms of assembly, alpha(8)-beta(8). The alpha component is a flavoprotein, the beta component is a hemoprotein. FAD serves as cofactor. It depends on FMN as a cofactor.

It catalyses the reaction hydrogen sulfide + 3 NADP(+) + 3 H2O = sulfite + 3 NADPH + 4 H(+). Its pathway is sulfur metabolism; hydrogen sulfide biosynthesis; hydrogen sulfide from sulfite (NADPH route): step 1/1. Its function is as follows. Component of the sulfite reductase complex that catalyzes the 6-electron reduction of sulfite to sulfide. This is one of several activities required for the biosynthesis of L-cysteine from sulfate. The flavoprotein component catalyzes the electron flow from NADPH -&gt; FAD -&gt; FMN to the hemoprotein component. The polypeptide is Sulfite reductase [NADPH] flavoprotein alpha-component (Shewanella sp. (strain ANA-3)).